We begin with the raw amino-acid sequence, 106 residues long: MDTSSPAAFVNGALLRRYIGQKVRAVIQVIRSDVGSVIGKSTDDQQIVVKGSPQPPLTTYLEVIGIAETDNTIRAEVWTNFGDSFDVQNYNELCKLANGEFRHLFI.

Methionine 1 bears the N-acetylmethionine mark.

Belongs to the replication factor A protein 3 family. In terms of assembly, component of the heterotrimeric canonical replication protein A complex (RPA).

The protein resides in the nucleus. Functionally, as part of the replication protein A (RPA/RP-A), a single-stranded DNA-binding heterotrimeric complex, may play an essential role in DNA replication, recombination and repair. Binds and stabilizes single-stranded DNA intermediates, preventing complementary DNA reannealing and recruiting different proteins involved in DNA metabolism. The sequence is that of Replication protein A 14 kDa subunit B (RPA3B) from Arabidopsis thaliana (Mouse-ear cress).